A 308-amino-acid polypeptide reads, in one-letter code: Acetyl-coenzyme A carboxylase carboxyl transferase subunit beta (308 aa).

The CoA carboxyltransferase N-terminal domain occupies 25–294 (VWTKCTSCEQ…PLVVSVNDAP (270 aa)). Residues C29, C32, C48, and C51 each contribute to the Zn(2+) site. The C4-type zinc-finger motif lies at 29–51 (CTSCEQVLYYAELERNLEVCPKC).

This sequence belongs to the AccD/PCCB family. Acetyl-CoA carboxylase is a heterohexamer composed of biotin carboxyl carrier protein (AccB), biotin carboxylase (AccC) and two subunits each of ACCase subunit alpha (AccA) and ACCase subunit beta (AccD). Zn(2+) serves as cofactor.

The protein resides in the cytoplasm. It carries out the reaction N(6)-carboxybiotinyl-L-lysyl-[protein] + acetyl-CoA = N(6)-biotinyl-L-lysyl-[protein] + malonyl-CoA. It participates in lipid metabolism; malonyl-CoA biosynthesis; malonyl-CoA from acetyl-CoA: step 1/1. Component of the acetyl coenzyme A carboxylase (ACC) complex. Biotin carboxylase (BC) catalyzes the carboxylation of biotin on its carrier protein (BCCP) and then the CO(2) group is transferred by the transcarboxylase to acetyl-CoA to form malonyl-CoA. The sequence is that of Acetyl-coenzyme A carboxylase carboxyl transferase subunit beta from Vibrio cholerae serotype O1 (strain ATCC 39315 / El Tor Inaba N16961).